Here is a 460-residue protein sequence, read N- to C-terminus: Putative E3 ubiquitin-protein ligase RING1b (460 aa).

The disordered stretch occupies residues 1–85 (MPSLKSFSAA…SQSSSAGELS (85 aa)). Over residues 21 to 31 (SEAERFNPEAV) the composition is skewed to basic and acidic residues. Composition is skewed to acidic residues over residues 32-51 (EKEE…DEED) and 59-71 (EAED…EEED). An RING-type zinc finger spans residues 103-143 (CSICLGIIRKTRTVMECLHRFCRECIDKSMRLGNNECPTCR). The disordered stretch occupies residues 196-300 (QVSQRQSKAL…TEQTHQRDSR (105 aa)). Positions 220–234 (RSRRSGGGSRRRRNC) are enriched in basic residues. Positions 240-249 (DTSEANDDDD) are enriched in acidic residues. Residues 250–265 (QNKRGKDSSSDEPCER) show a composition bias toward basic and acidic residues. Residues 276-290 (SSSNANNNDNCAGNG) are compositionally biased toward low complexity.

Heterodimer with RING1A. Interacts with CLF. Component of the PRC1-like complex, at least composed of RING1A, RING1B and LHP1.

Its subcellular location is the nucleus. It catalyses the reaction S-ubiquitinyl-[E2 ubiquitin-conjugating enzyme]-L-cysteine + [acceptor protein]-L-lysine = [E2 ubiquitin-conjugating enzyme]-L-cysteine + N(6)-ubiquitinyl-[acceptor protein]-L-lysine.. Its pathway is protein modification; protein ubiquitination. Putative E3 ubiquitin-protein ligase that mediates monoubiquitination of 'Lys-119' of histone H2A (H2AK119ub), thereby playing a central role in histone code and gene regulation. Functionally, as part of the PRC1-like complex, repress class I KNOX gene expression. PcG PRC1 complex maintains the transcriptionally repressive state of many genes, including Hox genes, throughout development. PcG PRC1 complex acts via chromatin remodeling and modification of histones, rendering chromatin heritably changed in its expressibility. This chain is Putative E3 ubiquitin-protein ligase RING1b (RING1B), found in Arabidopsis thaliana (Mouse-ear cress).